Here is a 124-residue protein sequence, read N- to C-terminus: Large ribosomal subunit protein bL20c (124 aa).

The protein belongs to the bacterial ribosomal protein bL20 family.

The protein resides in the plastid. The protein localises to the chloroplast. Functionally, binds directly to 23S ribosomal RNA and is necessary for the in vitro assembly process of the 50S ribosomal subunit. It is not involved in the protein synthesizing functions of that subunit. In Stigeoclonium helveticum (Green alga), this protein is Large ribosomal subunit protein bL20c.